Reading from the N-terminus, the 177-residue chain is ATP synthase subunit delta (177 aa).

It belongs to the ATPase delta chain family. F-type ATPases have 2 components, F(1) - the catalytic core - and F(0) - the membrane proton channel. F(1) has five subunits: alpha(3), beta(3), gamma(1), delta(1), epsilon(1). F(0) has three main subunits: a(1), b(2) and c(10-14). The alpha and beta chains form an alternating ring which encloses part of the gamma chain. F(1) is attached to F(0) by a central stalk formed by the gamma and epsilon chains, while a peripheral stalk is formed by the delta and b chains.

Its subcellular location is the cell inner membrane. Functionally, f(1)F(0) ATP synthase produces ATP from ADP in the presence of a proton or sodium gradient. F-type ATPases consist of two structural domains, F(1) containing the extramembraneous catalytic core and F(0) containing the membrane proton channel, linked together by a central stalk and a peripheral stalk. During catalysis, ATP synthesis in the catalytic domain of F(1) is coupled via a rotary mechanism of the central stalk subunits to proton translocation. Its function is as follows. This protein is part of the stalk that links CF(0) to CF(1). It either transmits conformational changes from CF(0) to CF(1) or is implicated in proton conduction. The sequence is that of ATP synthase subunit delta from Psychromonas ingrahamii (strain DSM 17664 / CCUG 51855 / 37).